Here is a 162-residue protein sequence, read N- to C-terminus: NADH-quinone oxidoreductase subunit E (162 aa).

[2Fe-2S] cluster is bound by residues cysteine 88, cysteine 93, cysteine 129, and cysteine 133.

The protein belongs to the complex I 24 kDa subunit family. In terms of assembly, composed of 13 different subunits. Subunits NuoCD, E, F, and G constitute the peripheral sector of the complex. The cofactor is [2Fe-2S] cluster.

The catalysed reaction is a quinone + NADH + 5 H(+)(in) = a quinol + NAD(+) + 4 H(+)(out). NDH-1 shuttles electrons from NADH, via FMN and iron-sulfur (Fe-S) centers, to quinones in the respiratory chain. Couples the redox reaction to proton translocation (for every two electrons transferred, four hydrogen ions are translocated across the cytoplasmic membrane), and thus conserves the redox energy in a proton gradient. This is NADH-quinone oxidoreductase subunit E (nuoE) from Buchnera aphidicola subsp. Acyrthosiphon pisum (strain APS) (Acyrthosiphon pisum symbiotic bacterium).